The primary structure comprises 440 residues: MEIDSEKIHERKQSDYNSLDERFEIQKEMYRGQQYSQIYFARLHLMRTLLYSLAPTWKSHLPVCKVLGLEKGKECIIVGTLFKHMKLKPCVLDEYSKERSVTPLVKPHNFMHPDDNLILEDESGRVKLAGSALSPAIYVTGVVVALHGKETNAGEFFVEDVLEAGLPPQIERPIDLQEDKYVVLLSGLCIGSKSANPLQFQLLVDHITGHLGDEEEQGLAAQIVHVVIAGNSFEFPRKLINGQNLASKDQSTLYEPIKELDIMLSQIAAGVSVDIMPGTNDPANFALPQQPLNRCLFPGSSPYNTFRSCTNPHSFDVDNIRFLGTSGQNIDDLGKYSEAKSKLDFVERTLRWRHLAPTAPNTLGCYPFTDRDPFLIETCPHVYFVGNQDKYDNRLIKGSEGQLVRLICIPKFCETGIAVAVNLRNLECHTLSFSTQINQS.

The protein belongs to the DNA polymerase delta/II small subunit family. In terms of assembly, heterodimer with subunits of 125 kDa and 50 kDa.

The protein resides in the nucleus. The catalysed reaction is DNA(n) + a 2'-deoxyribonucleoside 5'-triphosphate = DNA(n+1) + diphosphate. The function of the small subunit is not yet clear. This chain is DNA polymerase delta small subunit (POLD2), found in Arabidopsis thaliana (Mouse-ear cress).